A 210-amino-acid polypeptide reads, in one-letter code: dTTP/UTP pyrophosphatase (210 aa).

The active-site Proton acceptor is Asp-89.

This sequence belongs to the Maf family. YhdE subfamily. It depends on a divalent metal cation as a cofactor.

The protein localises to the cytoplasm. The enzyme catalyses dTTP + H2O = dTMP + diphosphate + H(+). The catalysed reaction is UTP + H2O = UMP + diphosphate + H(+). In terms of biological role, nucleoside triphosphate pyrophosphatase that hydrolyzes dTTP and UTP. May have a dual role in cell division arrest and in preventing the incorporation of modified nucleotides into cellular nucleic acids. The polypeptide is dTTP/UTP pyrophosphatase (Burkholderia orbicola (strain AU 1054)).